Reading from the N-terminus, the 566-residue chain is Pentatricopeptide repeat-containing protein At4g11690 (566 aa).

PPR repeat units lie at residues 93–127, 128–158, 162–196, 197–231, 232–266, 267–301, 302–336, 337–371, 372–406, 407–441, 442–476, 477–511, and 512–546; these read KFRL…GFVP, GSNC…NKSK, DVYS…GFSP, NVVI…GLVA, NERT…GVFP, NLYT…GVSC, NIVT…GINP, NLIT…GLSP, SLVT…GIKP, SKVT…GLVP, DVHT…NCEP, NEVI…ELAP, and NVAS…GIDP.

It belongs to the PPR family. P subfamily.

In Arabidopsis thaliana (Mouse-ear cress), this protein is Pentatricopeptide repeat-containing protein At4g11690.